The following is a 379-amino-acid chain: Heme chaperone HemW (379 aa).

The Radical SAM core domain maps to 1–233; the sequence is MKSAYIHIPF…MSKMEAHGIH (233 aa). Tyr5 is an S-adenosyl-L-methionine binding site. Residues Cys11, Cys15, and Cys18 each contribute to the [4Fe-4S] cluster site. Residues Gly60, 61 to 62, Glu94, Gln121, Arg133, and Asp158 each bind S-adenosyl-L-methionine; that span reads GT.

Belongs to the anaerobic coproporphyrinogen-III oxidase family. HemW subfamily. [4Fe-4S] cluster serves as cofactor.

It is found in the cytoplasm. Functionally, probably acts as a heme chaperone, transferring heme to an unknown acceptor. Binds one molecule of heme per monomer, possibly covalently. Binds 1 [4Fe-4S] cluster. The cluster is coordinated with 3 cysteines and an exchangeable S-adenosyl-L-methionine. In Bacillus subtilis (strain 168), this protein is Heme chaperone HemW.